Here is a 456-residue protein sequence, read N- to C-terminus: Bifunctional protein GlmU (456 aa).

The interval 1-228 (MPQNTLNIVI…SYLAAGVNNK (228 aa)) is pyrophosphorylase. UDP-N-acetyl-alpha-D-glucosamine-binding positions include 11-14 (LAAG), K25, Q75, 80-81 (GT), 102-104 (YGD), G138, E153, N168, and N226. D104 serves as a coordination point for Mg(2+). N226 provides a ligand contact to Mg(2+). The segment at 229–249 (LQLAELERIFQTEQAQELLKA) is linker. The segment at 250 to 456 (GVTLSDPARF…GWVRPEKDKQ (207 aa)) is N-acetyltransferase. R332 and K350 together coordinate UDP-N-acetyl-alpha-D-glucosamine. H362 acts as the Proton acceptor in catalysis. Residues Y365 and N376 each contribute to the UDP-N-acetyl-alpha-D-glucosamine site. Residues A379, 385–386 (NY), S404, A422, and R439 each bind acetyl-CoA.

It in the N-terminal section; belongs to the N-acetylglucosamine-1-phosphate uridyltransferase family. The protein in the C-terminal section; belongs to the transferase hexapeptide repeat family. In terms of assembly, homotrimer. Mg(2+) is required as a cofactor.

Its subcellular location is the cytoplasm. It catalyses the reaction alpha-D-glucosamine 1-phosphate + acetyl-CoA = N-acetyl-alpha-D-glucosamine 1-phosphate + CoA + H(+). The enzyme catalyses N-acetyl-alpha-D-glucosamine 1-phosphate + UTP + H(+) = UDP-N-acetyl-alpha-D-glucosamine + diphosphate. The protein operates within nucleotide-sugar biosynthesis; UDP-N-acetyl-alpha-D-glucosamine biosynthesis; N-acetyl-alpha-D-glucosamine 1-phosphate from alpha-D-glucosamine 6-phosphate (route II): step 2/2. It functions in the pathway nucleotide-sugar biosynthesis; UDP-N-acetyl-alpha-D-glucosamine biosynthesis; UDP-N-acetyl-alpha-D-glucosamine from N-acetyl-alpha-D-glucosamine 1-phosphate: step 1/1. It participates in bacterial outer membrane biogenesis; LPS lipid A biosynthesis. Functionally, catalyzes the last two sequential reactions in the de novo biosynthetic pathway for UDP-N-acetylglucosamine (UDP-GlcNAc). The C-terminal domain catalyzes the transfer of acetyl group from acetyl coenzyme A to glucosamine-1-phosphate (GlcN-1-P) to produce N-acetylglucosamine-1-phosphate (GlcNAc-1-P), which is converted into UDP-GlcNAc by the transfer of uridine 5-monophosphate (from uridine 5-triphosphate), a reaction catalyzed by the N-terminal domain. The chain is Bifunctional protein GlmU from Neisseria meningitidis serogroup C / serotype 2a (strain ATCC 700532 / DSM 15464 / FAM18).